A 513-amino-acid chain; its full sequence is ATP synthase subunit alpha (513 aa).

169–176 is an ATP binding site; the sequence is GDRQTGKT.

Belongs to the ATPase alpha/beta chains family. F-type ATPases have 2 components, CF(1) - the catalytic core - and CF(0) - the membrane proton channel. CF(1) has five subunits: alpha(3), beta(3), gamma(1), delta(1), epsilon(1). CF(0) has three main subunits: a(1), b(2) and c(9-12). The alpha and beta chains form an alternating ring which encloses part of the gamma chain. CF(1) is attached to CF(0) by a central stalk formed by the gamma and epsilon chains, while a peripheral stalk is formed by the delta and b chains.

The protein localises to the cell inner membrane. The catalysed reaction is ATP + H2O + 4 H(+)(in) = ADP + phosphate + 5 H(+)(out). Produces ATP from ADP in the presence of a proton gradient across the membrane. The alpha chain is a regulatory subunit. The sequence is that of ATP synthase subunit alpha from Enterobacter sp. (strain 638).